Here is a 451-residue protein sequence, read N- to C-terminus: UDP-N-acetylmuramoylalanine--D-glutamate ligase (451 aa).

An ATP-binding site is contributed by 119-125 (GSNGKTT).

The protein belongs to the MurCDEF family.

Its subcellular location is the cytoplasm. The enzyme catalyses UDP-N-acetyl-alpha-D-muramoyl-L-alanine + D-glutamate + ATP = UDP-N-acetyl-alpha-D-muramoyl-L-alanyl-D-glutamate + ADP + phosphate + H(+). Its pathway is cell wall biogenesis; peptidoglycan biosynthesis. Functionally, cell wall formation. Catalyzes the addition of glutamate to the nucleotide precursor UDP-N-acetylmuramoyl-L-alanine (UMA). This chain is UDP-N-acetylmuramoylalanine--D-glutamate ligase, found in Geobacillus sp. (strain WCH70).